Reading from the N-terminus, the 651-residue chain is PTS system sucrose-specific EIIBCA component (651 aa).

A PTS EIIB type-1 domain is found at 3-86 (HQEVADRVLN…IVKTGLKEVT (84 aa)). Cysteine 25 acts as the Phosphocysteine intermediate; for EIIB activity in catalysis. 10 consecutive transmembrane segments (helical) span residues 109-129 (VLSD…LLMA), 158-178 (MINA…GFSA), 182-202 (FGGN…PSLV), 204-224 (GYSV…VFGL), 226-246 (VAQA…FILA), 264-284 (FTPM…VGPV), 303-323 (TGWI…ITGL), 345-365 (FIFP…LAIF), 404-424 (FVFA…FHVL), and 444-464 (IPAF…PTFI). The 361-residue stretch at 121–481 (LVAGGLLMAL…DDRDQVKSPA (361 aa)) folds into the PTS EIIC type-1 domain. One can recognise a PTS EIIA type-1 domain in the interval 510–614 (DQVFSAEIMG…DPTVMLIVTN (105 aa)). The active-site Tele-phosphohistidine intermediate; for EIIA activity is the histidine 562.

Its subcellular location is the cell membrane. It catalyses the reaction N(pros)-phospho-L-histidyl-[protein](out) + sucrose = sucrose 6(G)-phosphate(in) + L-histidyl-[protein]. Functionally, the phosphoenolpyruvate-dependent sugar phosphotransferase system (sugar PTS), a major carbohydrate active transport system, catalyzes the phosphorylation of incoming sugar substrates concomitantly with their translocation across the cell membrane. This system is involved in sucrose transport. The protein is PTS system sucrose-specific EIIBCA component (scrA) of Pediococcus pentosaceus.